A 241-amino-acid chain; its full sequence is MTGSIRSSTAGIDVRQLGSVDYQTAWQMQRDLADARVAGGPDTLLLLQHPAVYTAGRRTEPHERPGPVFAGAAGAEAIDVVDTDRGGKITWHGPGQLVGYPIIGLAQPLDVVNYVRRLEESLIKVCLDLGLETGRVEGRSGVWIPAGSGRPERKIAAIGVRVSRATTLHGFALNCDCDLAAFTAIVPCGISDAGVTSLSAELGRTVGVEEVRGAVADAVCNALDGALPVRDHPGARVASST.

In terms of domain architecture, BPL/LPL catalytic spans 38 to 227; the sequence is AGGPDTLLLL…AVCNALDGAL (190 aa). Residues 85 to 92, 157 to 159, and 170 to 172 contribute to the substrate site; these read RGGKITWH, AIG, and GFA. The Acyl-thioester intermediate role is filled by Cys-188.

Belongs to the LipB family.

It is found in the cytoplasm. The enzyme catalyses octanoyl-[ACP] + L-lysyl-[protein] = N(6)-octanoyl-L-lysyl-[protein] + holo-[ACP] + H(+). It participates in protein modification; protein lipoylation via endogenous pathway; protein N(6)-(lipoyl)lysine from octanoyl-[acyl-carrier-protein]: step 1/2. Functionally, catalyzes the transfer of endogenously produced octanoic acid from octanoyl-acyl-carrier-protein onto the lipoyl domains of lipoate-dependent enzymes. Lipoyl-ACP can also act as a substrate although octanoyl-ACP is likely to be the physiological substrate. This chain is Octanoyltransferase, found in Mycobacterium marinum (strain ATCC BAA-535 / M).